Reading from the N-terminus, the 595-residue chain is Elongation factor 4 (595 aa).

The tr-type G domain occupies 2–183 (KNIRNFCIIA…AIIERISPPT (182 aa)). GTP is bound by residues 14–19 (DHGKST) and 130–133 (NKID).

Belongs to the TRAFAC class translation factor GTPase superfamily. Classic translation factor GTPase family. LepA subfamily.

It is found in the cell inner membrane. The catalysed reaction is GTP + H2O = GDP + phosphate + H(+). Required for accurate and efficient protein synthesis under certain stress conditions. May act as a fidelity factor of the translation reaction, by catalyzing a one-codon backward translocation of tRNAs on improperly translocated ribosomes. Back-translocation proceeds from a post-translocation (POST) complex to a pre-translocation (PRE) complex, thus giving elongation factor G a second chance to translocate the tRNAs correctly. Binds to ribosomes in a GTP-dependent manner. This chain is Elongation factor 4, found in Amoebophilus asiaticus (strain 5a2).